We begin with the raw amino-acid sequence, 125 residues long: Crustacean hyperglycemic hormones 5 (125 aa).

The N-terminal stretch at 1–34 (MKPGNTSFNMVSFRMVWTAMMATLLVAGASSAGT) is a signal peptide. 3 cysteine pairs are disulfide-bonded: Cys-58–Cys-94, Cys-74–Cys-90, and Cys-77–Cys-103. Val-123 bears the Valine amide mark.

This sequence belongs to the arthropod CHH/MIH/GIH/VIH hormone family. Produced by the medulla terminalis X-organ in the eyestalks and transported to the sinus gland where they are stored and released.

It localises to the secreted. Functionally, hormone found in the sinus gland of isopods and decapods which controls the blood sugar level. Has a secretagogue action over the amylase released from the midgut gland. May act as a stress hormone and may be involved in the control of molting and reproduction. The polypeptide is Crustacean hyperglycemic hormones 5 (Penaeus japonicus (Kuruma prawn)).